Here is a 142-residue protein sequence, read N- to C-terminus: Large ribosomal subunit protein uL11 (142 aa).

The protein belongs to the universal ribosomal protein uL11 family. Part of the ribosomal stalk of the 50S ribosomal subunit. Interacts with L10 and the large rRNA to form the base of the stalk. L10 forms an elongated spine to which L12 dimers bind in a sequential fashion forming a multimeric L10(L12)X complex. In terms of processing, one or more lysine residues are methylated.

Functionally, forms part of the ribosomal stalk which helps the ribosome interact with GTP-bound translation factors. The sequence is that of Large ribosomal subunit protein uL11 from Proteus vulgaris.